The following is a 31-amino-acid chain: Photosystem II reaction center protein T (31 aa).

A helical transmembrane segment spans residues 3 to 23; it reads SVAYIIVLAMALSVLFFAIAF.

This sequence belongs to the PsbT family. As to quaternary structure, PSII is composed of 1 copy each of membrane proteins PsbA, PsbB, PsbC, PsbD, PsbE, PsbF, PsbH, PsbI, PsbJ, PsbK, PsbL, PsbM, PsbT, PsbX, PsbY, PsbZ, Psb30/Ycf12, peripheral proteins PsbO, CyanoQ (PsbQ), PsbU, PsbV and a large number of cofactors. It forms dimeric complexes.

Its subcellular location is the cellular thylakoid membrane. Found at the monomer-monomer interface of the photosystem II (PS II) dimer, plays a role in assembly and dimerization of PSII. PSII is a light-driven water plastoquinone oxidoreductase, using light energy to abstract electrons from H(2)O, generating a proton gradient subsequently used for ATP formation. This is Photosystem II reaction center protein T from Picosynechococcus sp. (strain ATCC 27264 / PCC 7002 / PR-6) (Agmenellum quadruplicatum).